The sequence spans 484 residues: Cobyric acid synthase (484 aa).

The region spanning 248–435 (VLKVIVPVLP…LHGLFEGSQS (188 aa)) is the GATase cobBQ-type domain. The Nucleophile role is filled by cysteine 329. Residue histidine 427 is part of the active site.

This sequence belongs to the CobB/CobQ family. CobQ subfamily.

Its pathway is cofactor biosynthesis; adenosylcobalamin biosynthesis. Its function is as follows. Catalyzes amidations at positions B, D, E, and G on adenosylcobyrinic A,C-diamide. NH(2) groups are provided by glutamine, and one molecule of ATP is hydrogenolyzed for each amidation. This Pseudomonas putida (strain W619) protein is Cobyric acid synthase.